Reading from the N-terminus, the 779-residue chain is Tricorn protease-interacting factor F3 (779 aa).

Substrate-binding positions include Glu102 and 231–235 (GAMEN). Residue His266 coordinates Zn(2+). The Proton acceptor role is filled by Glu267. Zn(2+) contacts are provided by His270 and Glu289.

This sequence belongs to the peptidase M1 family. As to quaternary structure, part of the tricorn proteolytic complex. Zn(2+) serves as cofactor.

The protein resides in the cytoplasm. In terms of biological role, proteases F1, F2 and F3 degrade oligopeptides produced by Tricorn (themselves probably produced by the proteasome), yielding free amino acids. The protein is Tricorn protease-interacting factor F3 (trf3) of Thermoplasma volcanium (strain ATCC 51530 / DSM 4299 / JCM 9571 / NBRC 15438 / GSS1).